Reading from the N-terminus, the 1400-residue chain is Tiny macrocysts protein C (1400 aa).

8 helical membrane-spanning segments follow: residues 59–79 (ILTIISLLIEFCQLSSFGFKQ), 112–132 (IFFWIVIGLLLLGFFNIWYVA), 152–172 (FVSTTVAVLFIPIISLLLIGL), 196–216 (ANLSIAIVSIILIIVFSIVGF), 240–260 (FDVYILFVKLILALLNSLVDF), 266–286 (SIVYFILSITLVFGSIIILPY), 296–316 (SGFYTTVFWVSFMTLVTMGIN), and 320–340 (TATTCYITIVGAFFAFPIGYF). Disordered regions lie at residues 367–393 (FNEITKNEKSKTGDSKEKESSSPSKVT) and 683–712 (ERSGSKSGSSKSKDDSSESSSSSKGRRGKY). Basic and acidic residues predominate over residues 369-386 (EITKNEKSKTGDSKEKES). The next 4 helical transmembrane spans lie at 726-746 (WLMIGTTACCIIFLIVMLIVL), 975-995 (TMLYVWVAIFCFLIILGAVLF), 1162-1182 (VLAIFLLFGFITMGLWVTYSV), and 1342-1362 (VLTSVLAISCVLLLVIHLLLF).

The protein localises to the membrane. The polypeptide is Tiny macrocysts protein C (tmcC) (Dictyostelium discoideum (Social amoeba)).